A 430-amino-acid chain; its full sequence is Enolase (430 aa).

Gln163 is a (2R)-2-phosphoglycerate binding site. Residue Glu205 is the Proton donor of the active site. 3 residues coordinate Mg(2+): Asp242, Glu287, and Asp314. Residues Lys339, Arg368, Ser369, and Lys390 each coordinate (2R)-2-phosphoglycerate. Lys339 acts as the Proton acceptor in catalysis.

The protein belongs to the enolase family. Requires Mg(2+) as cofactor.

The protein localises to the cytoplasm. It is found in the secreted. The protein resides in the cell surface. The enzyme catalyses (2R)-2-phosphoglycerate = phosphoenolpyruvate + H2O. It participates in carbohydrate degradation; glycolysis; pyruvate from D-glyceraldehyde 3-phosphate: step 4/5. Functionally, catalyzes the reversible conversion of 2-phosphoglycerate (2-PG) into phosphoenolpyruvate (PEP). It is essential for the degradation of carbohydrates via glycolysis. This is Enolase from Geobacillus sp. (strain WCH70).